The following is a 616-amino-acid chain: Dihydroxy-acid dehydratase (616 aa).

Asp-81 contacts Mg(2+). Cys-122 serves as a coordination point for [2Fe-2S] cluster. Mg(2+) contacts are provided by Asp-123 and Lys-124. The residue at position 124 (Lys-124) is an N6-carboxylysine. Position 195 (Cys-195) interacts with [2Fe-2S] cluster. Residue Glu-491 coordinates Mg(2+). Ser-517 acts as the Proton acceptor in catalysis.

This sequence belongs to the IlvD/Edd family. As to quaternary structure, homodimer. It depends on [2Fe-2S] cluster as a cofactor. The cofactor is Mg(2+).

It carries out the reaction (2R)-2,3-dihydroxy-3-methylbutanoate = 3-methyl-2-oxobutanoate + H2O. It catalyses the reaction (2R,3R)-2,3-dihydroxy-3-methylpentanoate = (S)-3-methyl-2-oxopentanoate + H2O. Its pathway is amino-acid biosynthesis; L-isoleucine biosynthesis; L-isoleucine from 2-oxobutanoate: step 3/4. The protein operates within amino-acid biosynthesis; L-valine biosynthesis; L-valine from pyruvate: step 3/4. Functionally, functions in the biosynthesis of branched-chain amino acids. Catalyzes the dehydration of (2R,3R)-2,3-dihydroxy-3-methylpentanoate (2,3-dihydroxy-3-methylvalerate) into 2-oxo-3-methylpentanoate (2-oxo-3-methylvalerate) and of (2R)-2,3-dihydroxy-3-methylbutanoate (2,3-dihydroxyisovalerate) into 2-oxo-3-methylbutanoate (2-oxoisovalerate), the penultimate precursor to L-isoleucine and L-valine, respectively. This Yersinia pseudotuberculosis serotype O:1b (strain IP 31758) protein is Dihydroxy-acid dehydratase.